Consider the following 449-residue polypeptide: Tubulin beta-2 chain (449 aa).

Gln11 and Glu69 together coordinate GTP. Glu69 contributes to the Mg(2+) binding site. Residue His137 is modified to Methylhistidine. GTP contacts are provided by Ser138, Gly142, Thr143, Gly144, Asn204, and Asn226.

This sequence belongs to the tubulin family. Dimer of alpha and beta chains. A typical microtubule is a hollow water-filled tube with an outer diameter of 25 nm and an inner diameter of 15 nM. Alpha-beta heterodimers associate head-to-tail to form protofilaments running lengthwise along the microtubule wall with the beta-tubulin subunit facing the microtubule plus end conferring a structural polarity. Microtubules usually have 13 protofilaments but different protofilament numbers can be found in some organisms and specialized cells. Mg(2+) serves as cofactor.

The protein resides in the cytoplasm. The protein localises to the cytoskeleton. Its function is as follows. Tubulin is the major constituent of microtubules, a cylinder consisting of laterally associated linear protofilaments composed of alpha- and beta-tubulin heterodimers. Microtubules grow by the addition of GTP-tubulin dimers to the microtubule end, where a stabilizing cap forms. Below the cap, tubulin dimers are in GDP-bound state, owing to GTPase activity of alpha-tubulin. The polypeptide is Tubulin beta-2 chain (tubC) (Emericella nidulans (strain FGSC A4 / ATCC 38163 / CBS 112.46 / NRRL 194 / M139) (Aspergillus nidulans)).